We begin with the raw amino-acid sequence, 380 residues long: ATP phosphoribosyltransferase regulatory subunit (380 aa).

It belongs to the class-II aminoacyl-tRNA synthetase family. HisZ subfamily. As to quaternary structure, heteromultimer composed of HisG and HisZ subunits.

The protein localises to the cytoplasm. Its pathway is amino-acid biosynthesis; L-histidine biosynthesis; L-histidine from 5-phospho-alpha-D-ribose 1-diphosphate: step 1/9. In terms of biological role, required for the first step of histidine biosynthesis. May allow the feedback regulation of ATP phosphoribosyltransferase activity by histidine. In Thermoanaerobacter sp. (strain X514), this protein is ATP phosphoribosyltransferase regulatory subunit.